A 703-amino-acid chain; its full sequence is Elongation factor G 1 (703 aa).

In terms of domain architecture, tr-type G spans 8-290 (ERYRNIGISA…AVIDFLPSPV (283 aa)). Residues 17–24 (AHIDAGKT), 88–92 (DTPGH), and 142–145 (NKMD) each bind GTP.

Belongs to the TRAFAC class translation factor GTPase superfamily. Classic translation factor GTPase family. EF-G/EF-2 subfamily.

The protein resides in the cytoplasm. Catalyzes the GTP-dependent ribosomal translocation step during translation elongation. During this step, the ribosome changes from the pre-translocational (PRE) to the post-translocational (POST) state as the newly formed A-site-bound peptidyl-tRNA and P-site-bound deacylated tRNA move to the P and E sites, respectively. Catalyzes the coordinated movement of the two tRNA molecules, the mRNA and conformational changes in the ribosome. This is Elongation factor G 1 from Cupriavidus metallidurans (strain ATCC 43123 / DSM 2839 / NBRC 102507 / CH34) (Ralstonia metallidurans).